Reading from the N-terminus, the 150-residue chain is Group IIC secretory phospholipase A2 (150 aa).

An N-terminal signal peptide occupies residues M1–S20. 8 cysteine pairs are disulfide-bonded: C46–C143, C48–C64, C63–C121, C69–C150, C70–C114, C79–C107, C97–C112, and C99–C105. The Ca(2+) site is built by Y47, G49, and G51. H67 is an active-site residue. D68 contacts Ca(2+). N92 carries an N-linked (GlcNAc...) asparagine glycan. The active site involves D115.

The protein belongs to the phospholipase A2 family. The cofactor is Ca(2+).

Its subcellular location is the secreted. It catalyses the reaction a 1,2-diacyl-sn-glycero-3-phosphocholine + H2O = a 1-acyl-sn-glycero-3-phosphocholine + a fatty acid + H(+). Functionally, PA2 catalyzes the calcium-dependent hydrolysis of the 2-acyl groups in 3-sn-phosphoglycerides. The chain is Group IIC secretory phospholipase A2 (Pla2g2c) from Rattus norvegicus (Rat).